A 459-amino-acid chain; its full sequence is tRNA modification GTPase MnmE (459 aa).

Positions 22, 85, and 124 each coordinate (6S)-5-formyl-5,6,7,8-tetrahydrofolate. In terms of domain architecture, TrmE-type G spans Gly221 to Phe380. Asn231 lines the K(+) pocket. GTP contacts are provided by residues Asn231–Ser236, Thr250–Thr256, and Asp275–Gly278. Mg(2+) is bound at residue Ser235. Residues Thr250, Val252, and Thr255 each coordinate K(+). Position 256 (Thr256) interacts with Mg(2+). A (6S)-5-formyl-5,6,7,8-tetrahydrofolate-binding site is contributed by Lys459.

Belongs to the TRAFAC class TrmE-Era-EngA-EngB-Septin-like GTPase superfamily. TrmE GTPase family. As to quaternary structure, homodimer. Heterotetramer of two MnmE and two MnmG subunits. K(+) serves as cofactor.

The protein resides in the cytoplasm. Functionally, exhibits a very high intrinsic GTPase hydrolysis rate. Involved in the addition of a carboxymethylaminomethyl (cmnm) group at the wobble position (U34) of certain tRNAs, forming tRNA-cmnm(5)s(2)U34. The sequence is that of tRNA modification GTPase MnmE from Staphylococcus aureus (strain MW2).